A 206-amino-acid polypeptide reads, in one-letter code: ATP-dependent Clp protease proteolytic subunit 1 (206 aa).

Ser-103 acts as the Nucleophile in catalysis. His-128 is a catalytic residue.

Belongs to the peptidase S14 family. Fourteen ClpP subunits assemble into 2 heptameric rings which stack back to back to give a disk-like structure with a central cavity, resembling the structure of eukaryotic proteasomes.

It localises to the cytoplasm. The catalysed reaction is Hydrolysis of proteins to small peptides in the presence of ATP and magnesium. alpha-casein is the usual test substrate. In the absence of ATP, only oligopeptides shorter than five residues are hydrolyzed (such as succinyl-Leu-Tyr-|-NHMec, and Leu-Tyr-Leu-|-Tyr-Trp, in which cleavage of the -Tyr-|-Leu- and -Tyr-|-Trp bonds also occurs).. Its function is as follows. Cleaves peptides in various proteins in a process that requires ATP hydrolysis. Has a chymotrypsin-like activity. Plays a major role in the degradation of misfolded proteins. In Protochlamydia amoebophila (strain UWE25), this protein is ATP-dependent Clp protease proteolytic subunit 1.